A 150-amino-acid chain; its full sequence is Keratin-associated protein 15-1 (150 aa).

Belongs to the PMG family. Interacts with hair keratins. In terms of tissue distribution, expressed at high levels in skin and at lower levels in the developing mammary gland.

Functionally, in the hair cortex, hair keratin intermediate filaments are embedded in an interfilamentous matrix, consisting of hair keratin-associated proteins (KRTAP), which are essential for the formation of a rigid and resistant hair shaft through their extensive disulfide bond cross-linking with abundant cysteine residues of hair keratins. The matrix proteins include the high-sulfur and high-glycine-tyrosine keratins. This chain is Keratin-associated protein 15-1, found in Mus musculus (Mouse).